Consider the following 439-residue polypeptide: Damage-control phosphatase ARMT1 (439 aa).

At Ala-2 the chain carries N-acetylalanine. Residue Ser-4 is modified to Phosphoserine. Lys-40 bears the N6-acetyllysine mark. Mn(2+) is bound by residues Asp-251 and Asn-252. Residue 251 to 252 participates in substrate binding; the sequence is DN. S-adenosyl-L-methionine is bound by residues Glu-256 and Asp-289. Asp-289 serves as a coordination point for Mn(2+). Substrate contacts are provided by residues 365–369 and Lys-402; that span reads DLNYR. Residues 399-402 carry the Subfamily III RTxK motif motif; that stretch reads RTLK.

Belongs to the damage-control phosphatase family. Sugar phosphate phosphatase III subfamily. Mn(2+) is required as a cofactor. Requires Ni(2+) as cofactor. Automethylated.

The enzyme catalyses beta-D-fructose 1-phosphate + H2O = D-fructose + phosphate. The catalysed reaction is beta-D-fructose 6-phosphate = dihydroxyacetone + D-glyceraldehyde 3-phosphate. It carries out the reaction L-glutamyl-[protein] + S-adenosyl-L-methionine = [protein]-L-glutamate 5-O-methyl ester + S-adenosyl-L-homocysteine. Functionally, metal-dependent phosphatase that shows phosphatase activity against several substrates, including fructose-1-phosphate and fructose-6-phosphate. Its preference for fructose-1-phosphate, a strong glycating agent that causes DNA damage rather than a canonical yeast metabolite, suggests a damage-control function in hexose phosphate metabolism. Has also been shown to have O-methyltransferase activity that methylates glutamate residues of target proteins to form gamma-glutamyl methyl ester residues. Possibly methylates PCNA, suggesting it is involved in the DNA damage response. The polypeptide is Damage-control phosphatase ARMT1 (Mus musculus (Mouse)).